The primary structure comprises 382 residues: Anhydro-N-acetylmuramic acid kinase (382 aa).

Residue 22–29 coordinates ATP; that stretch reads GTSMDGVD.

Belongs to the anhydro-N-acetylmuramic acid kinase family.

The catalysed reaction is 1,6-anhydro-N-acetyl-beta-muramate + ATP + H2O = N-acetyl-D-muramate 6-phosphate + ADP + H(+). It participates in amino-sugar metabolism; 1,6-anhydro-N-acetylmuramate degradation. It functions in the pathway cell wall biogenesis; peptidoglycan recycling. Functionally, catalyzes the specific phosphorylation of 1,6-anhydro-N-acetylmuramic acid (anhMurNAc) with the simultaneous cleavage of the 1,6-anhydro ring, generating MurNAc-6-P. Is required for the utilization of anhMurNAc either imported from the medium or derived from its own cell wall murein, and thus plays a role in cell wall recycling. The polypeptide is Anhydro-N-acetylmuramic acid kinase (Burkholderia orbicola (strain AU 1054)).